The primary structure comprises 526 residues: Arp2/3 complex-activating protein rickA (526 aa).

The interval 305–356 is disordered; that stretch reads TTSSIAKPLENNVTPPPPLTKNNIPPPPPPPPLSKNNILPPPPPPMPTMAPA. A compositionally biased stretch (pro residues) spans 318 to 352; the sequence is TPPPPLTKNNIPPPPPPPPLSKNNILPPPPPPMPT. WH2 domains are found at residues 383–400 and 410–427; these read DTSDLMREIAGPKNLRKV and SRDLLLQSIRGEHKLRKV. Disordered stretches follow at residues 425–452 and 464–526; these read RKVEFDPNTGKPVAHSHSKPAQNVSKPN and MEMS…FVRS. The tract at residues 448 to 484 is central and acidic domains; it reads VSKPNGVASILARRVAMEMSDSSSSSGSESDSGNWSD. The span at 464–480 shows a compositional bias: low complexity; the sequence is MEMSDSSSSSGSESDSG. Polar residues-rich tracts occupy residues 481–491 and 506–526; these read NWSDASVNSNK and TTHAQKILSNRSSQKPSFVRS.

As to quaternary structure, homodimer.

It localises to the cell surface. In terms of biological role, recruits and activates the Arp2/3 complex, which in turn leads to actin polymerization, promoting Rickettsia motility during infection. This chain is Arp2/3 complex-activating protein rickA (rickA), found in Rickettsia felis (strain ATCC VR-1525 / URRWXCal2) (Rickettsia azadi).